A 194-amino-acid polypeptide reads, in one-letter code: Small ribosomal subunit protein uS11m (194 aa).

The protein belongs to the universal ribosomal protein uS11 family. As to quaternary structure, component of the mitochondrial small ribosomal subunit (mt-SSU). Mature mammalian 55S mitochondrial ribosomes consist of a small (28S) and a large (39S) subunit. The 28S small subunit contains a 12S ribosomal RNA (12S mt-rRNA) and 30 different proteins. The 39S large subunit contains a 16S rRNA (16S mt-rRNA), a copy of mitochondrial valine transfer RNA (mt-tRNA(Val)), which plays an integral structural role, and 52 different proteins.

It localises to the mitochondrion. This Homo sapiens (Human) protein is Small ribosomal subunit protein uS11m (MRPS11).